The sequence spans 159 residues: Small ribosomal subunit protein uS17x (159 aa).

It belongs to the universal ribosomal protein uS17 family.

The protein resides in the cytoplasm. This Arabidopsis thaliana (Mouse-ear cress) protein is Small ribosomal subunit protein uS17x (RPS11C).